Reading from the N-terminus, the 48-residue chain is Omega-agatoxin-Aa5a (48 aa).

Disulfide bonds link Cys3–Cys16, Cys10–Cys21, Cys15–Cys32, and Cys23–Cys30.

The protein belongs to the neurotoxin 02 (plectoxin) family. As to expression, expressed by the venom gland.

The protein resides in the secreted. The toxin blocks voltage-gated calcium channels in rat cerebellar granule cells (IC(50)=200 nM). The chain is Omega-agatoxin-Aa5a from Agelenopsis aperta (North American funnel-web spider).